Reading from the N-terminus, the 432-residue chain is Phosphomethylpyrimidine synthase (432 aa).

Substrate-binding positions include Asn69, Met98, Tyr127, His163, 185-187 (SRG), 226-229 (DACR), and Glu265. His269 provides a ligand contact to Zn(2+). A substrate-binding site is contributed by Tyr292. His333 contributes to the Zn(2+) binding site. Residues Cys409, Cys412, and Cys416 each coordinate [4Fe-4S] cluster.

It belongs to the ThiC family. [4Fe-4S] cluster serves as cofactor.

The enzyme catalyses 5-amino-1-(5-phospho-beta-D-ribosyl)imidazole + S-adenosyl-L-methionine = 4-amino-2-methyl-5-(phosphooxymethyl)pyrimidine + CO + 5'-deoxyadenosine + formate + L-methionine + 3 H(+). The protein operates within cofactor biosynthesis; thiamine diphosphate biosynthesis. Catalyzes the synthesis of the hydroxymethylpyrimidine phosphate (HMP-P) moiety of thiamine from aminoimidazole ribotide (AIR) in a radical S-adenosyl-L-methionine (SAM)-dependent reaction. This Pelotomaculum thermopropionicum (strain DSM 13744 / JCM 10971 / SI) protein is Phosphomethylpyrimidine synthase.